The primary structure comprises 494 residues: Metalloprotease TIKI1 (494 aa).

An N-terminal signal peptide occupies residues 1–25 (MTMMTMMMVSWSAFLQICWILMVRA). Topologically, residues 26 to 467 (NQFNPGEPSG…QEHERANHDR (442 aa)) are extracellular. Asn-234 and Asn-282 each carry an N-linked (GlcNAc...) asparagine glycan. Residues 468-488 (TFSGSSSRTGPALSALAVCVQ) form a helical membrane-spanning segment. Residues 489–494 (MLRLLL) lie on the Cytoplasmic side of the membrane.

It belongs to the TIKI family. It depends on Mn(2+) as a cofactor. Requires Co(2+) as cofactor.

It is found in the cell membrane. Its function is as follows. Metalloprotease that acts as a negative regulator of the Wnt signaling pathway by mediating the cleavage of the N-terminal residues of a subset of Wnt proteins. Following cleavage, Wnt proteins become oxidized and form large disulfide-bond oligomers, leading to their inactivation. This is Metalloprotease TIKI1 (trabd2a) from Danio rerio (Zebrafish).